The following is a 166-amino-acid chain: NADH-ubiquinone oxidoreductase chain 6 (166 aa).

The next 5 helical transmembrane spans lie at 1–21, 26–46, 47–67, 86–106, and 139–159; these read MMYF…AFAS, IYGG…IVSL, GGSF…LVVF, TVVL…YEFF, and CGGW…FVVL.

Belongs to the complex I subunit 6 family. Core subunit of respiratory chain NADH dehydrogenase (Complex I) which is composed of 45 different subunits.

It localises to the mitochondrion inner membrane. The catalysed reaction is a ubiquinone + NADH + 5 H(+)(in) = a ubiquinol + NAD(+) + 4 H(+)(out). Functionally, core subunit of the mitochondrial membrane respiratory chain NADH dehydrogenase (Complex I) which catalyzes electron transfer from NADH through the respiratory chain, using ubiquinone as an electron acceptor. Essential for the catalytic activity and assembly of complex I. This Tachyglossus aculeatus aculeatus (Southeast Australian short-beaked echidna) protein is NADH-ubiquinone oxidoreductase chain 6 (MT-ND6).